We begin with the raw amino-acid sequence, 424 residues long: Serine--tRNA ligase (424 aa).

230 to 232 (TAE) provides a ligand contact to L-serine. 261–263 (RSE) is an ATP binding site. L-serine is bound at residue glutamate 284. 348 to 351 (EISS) contacts ATP. Serine 382 provides a ligand contact to L-serine.

It belongs to the class-II aminoacyl-tRNA synthetase family. Type-1 seryl-tRNA synthetase subfamily. As to quaternary structure, homodimer. The tRNA molecule binds across the dimer.

The protein localises to the cytoplasm. It carries out the reaction tRNA(Ser) + L-serine + ATP = L-seryl-tRNA(Ser) + AMP + diphosphate + H(+). The enzyme catalyses tRNA(Sec) + L-serine + ATP = L-seryl-tRNA(Sec) + AMP + diphosphate + H(+). It functions in the pathway aminoacyl-tRNA biosynthesis; selenocysteinyl-tRNA(Sec) biosynthesis; L-seryl-tRNA(Sec) from L-serine and tRNA(Sec): step 1/1. Its function is as follows. Catalyzes the attachment of serine to tRNA(Ser). Is also able to aminoacylate tRNA(Sec) with serine, to form the misacylated tRNA L-seryl-tRNA(Sec), which will be further converted into selenocysteinyl-tRNA(Sec). In Solibacter usitatus (strain Ellin6076), this protein is Serine--tRNA ligase.